Reading from the N-terminus, the 134-residue chain is L-ectoine synthase (134 aa).

It belongs to the ectoine synthase family.

It carries out the reaction (2S)-4-acetamido-2-aminobutanoate = L-ectoine + H2O. It participates in amine and polyamine biosynthesis; ectoine biosynthesis; L-ectoine from L-aspartate 4-semialdehyde: step 3/3. Catalyzes the circularization of gamma-N-acetyl-alpha,gamma-diaminobutyric acid (ADABA) to ectoine (1,4,5,6-tetrahydro-2-methyl-4-pyrimidine carboxylic acid), which is an excellent osmoprotectant. The protein is L-ectoine synthase (ectC) of Sporosarcina pasteurii (Bacillus pasteurii).